The sequence spans 513 residues: NADH-quinone oxidoreductase chain 13 (513 aa).

14 helical membrane-spanning segments follow: residues 3–23 (NLLSIITFLPIVAAIIMALFL), 34–54 (AKWLALLTTTATFVISLFVLF), 81–101 (VDGISVLFVLLTTFMMPLTIL), 112–132 (EYMIAFLVLEGLMIGVFTALD), 133–153 (LVLFYLFFEAGLIPMFLIIGI), 164–184 (FKFFLYTFLGSVLMLVAMIAM), 211–231 (MTVVGGMQMLLFLAFFASFAV), 250–270 (PTAGSVLLAAVLLKMGGYGFL), 277–297 (FPVASGVAQPYVFWLSAIAIV), 312–332 (VIAYSSVAHMGYVTMGVFAAN), 340–360 (IFQMLSHGFISGALFLCVGVI), 383–403 (AAVFMFFTMANVGLPGTSGFV), 418–438 (WVALVATSGVILSAAYALWLY), and 463–483 (WVFIPLIAMTLILGVYPRLVT).

Belongs to the complex I subunit 4 family. NDH-1 is composed of at least 14 different subunits, Nqo1 to Nqo14. The complex has a L-shaped structure, with the hydrophobic arm (subunits Nqo7, Nqo8, Nqo10 to Nqo14) embedded in the inner membrane and the hydrophilic peripheral arm (subunits Nqo1 to Nqo6, Nqo9) protruding into the bacterial cytoplasm. The hydrophilic domain contains all the redox centers.

The protein localises to the cell inner membrane. It catalyses the reaction a quinone + NADH + 5 H(+)(in) = a quinol + NAD(+) + 4 H(+)(out). Functionally, NDH-1 shuttles electrons from NADH, via FMN and iron-sulfur (Fe-S) centers, to quinones in the respiratory chain. The immediate electron acceptor for the enzyme in this species is believed to be ubiquinone. Couples the redox reaction to proton translocation (for every two electrons transferred, four hydrogen ions are translocated across the cytoplasmic membrane), and thus conserves the redox energy in a proton gradient. This is NADH-quinone oxidoreductase chain 13 from Paracoccus denitrificans.